Reading from the N-terminus, the 556-residue chain is Melanoma-associated antigen B4 (556 aa).

The segment covering 1 to 15 (MPRGQKSKARAREKR) has biased composition (basic residues). Positions 1–110 (MPRGQKSKAR…RFSENPQNDL (110 aa)) are disordered. Polar residues predominate over residues 39–73 (PSCSNQDSGDAVASTSTAGFPQKSKSQGEAPTTTA). The span at 77–87 (GACRRSRKSTR) shows a compositional bias: basic residues. The MAGE domain maps to 111-310 (LTRKTGMLMQ…QAFPTHYEEA (200 aa)). Positions 315–335 (EERAQAEAVGSPGTSAKDKAE) are disordered. Ser325 carries the phosphoserine modification. 15 consecutive repeat copies span residues 334 to 348 (AEAK…CKYQ), 349 to 363 (AESK…CKDQ), 364 to 378 (AESK…CKDN), 379 to 392 (AKSK…RKYK), 393 to 407 (AKSK…CKDQ), 408 to 421 (AESK…CKDQ), 422 to 436 (AESK…CKDQ), 437 to 451 (AESK…CKDQ), 452 to 466 (AESK…CKDK), 467 to 480 (AKSK…HKYK), 481 to 495 (AKSK…CKDQ), 496 to 510 (AESK…CKDQ), 511 to 525 (AESK…CKDN), 526 to 539 (AKSK…RKYK), and 540 to 554 (AKSK…GKDK). The segment at 334 to 554 (AEAKVTLVDS…PLVDSSGKDK (221 aa)) is 15 X 15 AA approximate tandem repeats.

Expressed in testis (at protein level).

Its subcellular location is the cytoplasm. The polypeptide is Melanoma-associated antigen B4 (Mus musculus (Mouse)).